Reading from the N-terminus, the 509-residue chain is Bifunctional purine biosynthesis protein PurH (509 aa).

The region spanning M1 to V144 is the MGS-like domain.

Belongs to the PurH family.

It catalyses the reaction (6R)-10-formyltetrahydrofolate + 5-amino-1-(5-phospho-beta-D-ribosyl)imidazole-4-carboxamide = 5-formamido-1-(5-phospho-D-ribosyl)imidazole-4-carboxamide + (6S)-5,6,7,8-tetrahydrofolate. The catalysed reaction is IMP + H2O = 5-formamido-1-(5-phospho-D-ribosyl)imidazole-4-carboxamide. The protein operates within purine metabolism; IMP biosynthesis via de novo pathway; 5-formamido-1-(5-phospho-D-ribosyl)imidazole-4-carboxamide from 5-amino-1-(5-phospho-D-ribosyl)imidazole-4-carboxamide (10-formyl THF route): step 1/1. It participates in purine metabolism; IMP biosynthesis via de novo pathway; IMP from 5-formamido-1-(5-phospho-D-ribosyl)imidazole-4-carboxamide: step 1/1. The protein is Bifunctional purine biosynthesis protein PurH of Listeria monocytogenes serotype 4b (strain F2365).